Here is a 303-residue protein sequence, read N- to C-terminus: Glycine--tRNA ligase alpha subunit (303 aa).

This sequence belongs to the class-II aminoacyl-tRNA synthetase family. In terms of assembly, tetramer of two alpha and two beta subunits.

It is found in the cytoplasm. The enzyme catalyses tRNA(Gly) + glycine + ATP = glycyl-tRNA(Gly) + AMP + diphosphate. The chain is Glycine--tRNA ligase alpha subunit from Salmonella arizonae (strain ATCC BAA-731 / CDC346-86 / RSK2980).